The chain runs to 373 residues: Anhydro-N-acetylmuramic acid kinase (373 aa).

Residue 12–19 (GTSLDGVD) participates in ATP binding.

It belongs to the anhydro-N-acetylmuramic acid kinase family.

The catalysed reaction is 1,6-anhydro-N-acetyl-beta-muramate + ATP + H2O = N-acetyl-D-muramate 6-phosphate + ADP + H(+). It participates in amino-sugar metabolism; 1,6-anhydro-N-acetylmuramate degradation. Its pathway is cell wall biogenesis; peptidoglycan recycling. Catalyzes the specific phosphorylation of 1,6-anhydro-N-acetylmuramic acid (anhMurNAc) with the simultaneous cleavage of the 1,6-anhydro ring, generating MurNAc-6-P. Is required for the utilization of anhMurNAc either imported from the medium or derived from its own cell wall murein, and thus plays a role in cell wall recycling. This Salmonella gallinarum (strain 287/91 / NCTC 13346) protein is Anhydro-N-acetylmuramic acid kinase.